The following is a 238-amino-acid chain: Purine nucleoside phosphorylase DeoD-type (238 aa).

H5 is an a purine D-ribonucleoside binding site. Phosphate contacts are provided by residues G21, R25, R44, and 88–91; that span reads RIGS. A purine D-ribonucleoside contacts are provided by residues 180–182 and 204–205; these read EME and SD. The Proton donor role is filled by D205.

It belongs to the PNP/UDP phosphorylase family. Homohexamer; trimer of homodimers.

It catalyses the reaction a purine D-ribonucleoside + phosphate = a purine nucleobase + alpha-D-ribose 1-phosphate. The catalysed reaction is a purine 2'-deoxy-D-ribonucleoside + phosphate = a purine nucleobase + 2-deoxy-alpha-D-ribose 1-phosphate. Catalyzes the reversible phosphorolytic breakdown of the N-glycosidic bond in the beta-(deoxy)ribonucleoside molecules, with the formation of the corresponding free purine bases and pentose-1-phosphate. This chain is Purine nucleoside phosphorylase DeoD-type, found in Xenorhabdus nematophila (strain ATCC 19061 / DSM 3370 / CCUG 14189 / LMG 1036 / NCIMB 9965 / AN6).